Here is a 373-residue protein sequence, read N- to C-terminus: uncharacterized protein (373 aa).

This is an uncharacterized protein from Methanocaldococcus jannaschii (strain ATCC 43067 / DSM 2661 / JAL-1 / JCM 10045 / NBRC 100440) (Methanococcus jannaschii).